The sequence spans 459 residues: N-chimaerin (459 aa).

The residue at position 2 (Ala-2) is an N-acetylalanine. An SH2 domain is found at 49 to 135 (EYHGMISREE…IETKAAEYIA (87 aa)). Thr-192 is modified (phosphothreonine). Residues 205–255 (VHNFKVHTFRGPHWCEYCANFMWGLIAQGVKCADCGLNVHKQCSKMVPNDC) form a Phorbol-ester/DAG-type zinc finger. Positions 268–459 (CDLTTLVKAH…LLIKNEDILF (192 aa)) constitute a Rho-GAP domain. Thr-340 is modified (phosphothreonine).

Interacts with EPHA4; effector of EPHA4 in axon guidance linking EPHA4 activation to RAC1 regulation. May also interact with EPHB1 and EPHB2. In terms of processing, phosphorylated. Phosphorylation is EPHA4 kinase activity-dependent.

Functionally, GTPase-activating protein for p21-rac and a phorbol ester receptor. May play an important role in neuronal signal-transduction mechanisms. Involved in the assembly of neuronal locomotor circuits as a direct effector of EPHA4 in axon guidance. This chain is N-chimaerin (Chn1), found in Mus musculus (Mouse).